The following is a 405-amino-acid chain: Phosphoglycerate kinase (405 aa).

Substrate contacts are provided by residues 24-26 (DFN), R40, 63-66 (HLGR), R122, and R162. Residues K212, E331, and 361–364 (GGDS) each bind ATP.

This sequence belongs to the phosphoglycerate kinase family. In terms of assembly, monomer.

The protein localises to the cytoplasm. It catalyses the reaction (2R)-3-phosphoglycerate + ATP = (2R)-3-phospho-glyceroyl phosphate + ADP. The protein operates within carbohydrate degradation; glycolysis; pyruvate from D-glyceraldehyde 3-phosphate: step 2/5. The polypeptide is Phosphoglycerate kinase (Corynebacterium glutamicum (strain R)).